Consider the following 1435-residue polypeptide: MGARASVLSGGKLDRWEKIRLRPGGKKKYKLKHIVWASRELERFAVNPGLLETSEGCRQILGQLQPSLQTGSEECRSLYNTVATLYCVHQRIEIKDTKEALDKIKEEQNKSKKKAQQAAADTGHSSQVSQNYPIVQNIQGQMVHQAISPRTLNAWVKVVEEKAFSPEVIPMFSALSEGATPQDLNTMLNTVGGHQAAMQMLKETINEEAAEWDRVHPVHAGPIAPGQMREPRGSDIAGTTSTLQEQIGWMTNNPPIPVGEIYKRWIILGLNKIVRMYSPTSILDIRQGPKEPFRDYVDRFYKTLRAEQASQEVKNWMTETLLVQNANPDCKTILKALGPAATLEEMMTACQGVGGPGHKARVLAEAMSQVTNSATIMMQRGNFRNQRKIVKCFNCGKEGHIARNCRAPRKKGCWKCGKEGHQMKDCTERQANFFREDLAFLQGKAREFSSEQTRANSPTRRELQVWGRDNNSPSEAGADRQGTVSFNFPQITLWQRPLVTIKIGGQLKEALLDTGADDTVLEEMSLPGRWKPKMIGGIGGFIKVRQYDQILIEICGHKAIGTVLVGPTPVNIIGRNLLTQIGCTLNFPISPIETVPVKLKPGMDGPKVKQWPLTEEKIKALVEICTEMEKEGKISKIGPENPYNTPVFAIKKKDSTKWRKLVDFRELNKRTQDFWEVQLGIPHPAGLKKKKSVTVLDVGDAYFSVPLDEDFRKYTAFTIPSINNETPGIRYQYNVLPQGWKGSPAIFQSSMTKILEPFRKQNPDIVIYQYMDDLYVGSDLEIGQHRTKIEELRQHLLRWGLTTPDKKHQKEPPFLWMGYELHPDKWTVQPIVLPEKDSWTVNDIQKLVGKLNWASQIYPGIKVRQLCKLLRGTKALTEVIPLTEEAELELAENREILKEPVHGVYYDPSKDLIAEIQKQGQGQWTYQIYQEPFKNLKTGKYARMRGTHTNDVKQLTEAVQKITTESIVIWGKTPKFKLPIQKETWETWWTEYWQATWIPEWEFVNTPPLVKLWYQLEKEPIVGAETFYVDGAANRETKLGKAGYVTNKGRQKVVPLTNTTNQKTELQAIYLALQDSGLEVNIVTDSQYALGIIQAQPDKSESELVNQIIEQLIKKEKVYLAWVPAHKGIGGNEQVDKLVSAGIRKILFLDGIDKAQDEHEKYHSNWRAMASDFNLPPVVAKEIVASCDKCQLKGEAMHGQVDCSPGIWQLDCTHLEGKVILVAVHVASGYIEAEVIPAETGQETAYFLLKLAGRWPVKTIHTDNGSNFTSATVKAACWWAGIKQEFGIPYNPQSQGVVESMNKELKKIIGQVRDQAEHLKTAVQMAVFIHNFKRKGGIGGYSAGERIVDIIATDIQTKELQKQITKIQNFRVYYRDSRNPLWKGPAKLLWKGEGAVVIQDNSDIKVVPRRKAKIIRDYGKQMAGDDCVASRQDED.

Glycine 2 is lipidated: N-myristoyl glycine; by host. The interval 7 to 31 is interaction with Gp41; sequence VLSGGKLDRWEKIRLRPGGKKKYKL. The segment at 8–43 is interaction with host CALM1; the sequence is LSGGKLDRWEKIRLRPGGKKKYKLKHIVWASRELER. Residues 12–19 form an interaction with host AP3D1 region; sequence KLDRWEKI. The interval 14-33 is interaction with membrane phosphatidylinositol 4,5-bisphosphate and RNA; that stretch reads DRWEKIRLRPGGKKKYKLKH. A Nuclear export signal motif is present at residues 16 to 22; it reads WEKIRLR. The Nuclear localization signal signature appears at 26–32; that stretch reads KKKYKLK. Positions 73–77 are interaction with membrane phosphatidylinositol 4,5-bisphosphate; that stretch reads EECRS. The tract at residues 107–128 is disordered; that stretch reads EQNKSKKKAQQAAADTGHSSQV. Position 132 is a phosphotyrosine; by host (tyrosine 132). Residues 189–227 are interaction with human PPIA/CYPA and NUP153; it reads NTVGGHQAAMQMLKETINEEAAEWDRVHPVHAGPIAPGQ. A dimerization/Multimerization of capsid protein p24 region spans residues 277–363; sequence YSPTSILDIR…GGPGHKARVL (87 aa). CCHC-type zinc fingers lie at residues 390–407 and 411–428; these read VKCFNCGKEGHIARNCRA and KGCWKCGKEGHQMKDCTE. The disordered stretch occupies residues 449–481; it reads SSEQTRANSPTRRELQVWGRDNNSPSEAGADRQ. Residues 489 to 493 form a dimerization of protease region; it reads PQITL. Positions 508–577 constitute a Peptidase A2 domain; sequence KEALLDTGAD…TPVNIIGRNL (70 aa). Aspartate 513 acts as the For protease activity; shared with dimeric partner in catalysis. Dimerization of protease regions lie at residues 537-543 and 576-588; these read GIGGFIK and NLLTQIGCTLNFP. The Reverse transcriptase domain maps to 631–821; sequence EGKISKIGPE…PPFLWMGYEL (191 aa). Mg(2+) contacts are provided by aspartate 697, aspartate 772, and aspartate 773. Residues 814–822 form an RT 'primer grip' region; it reads FLWMGYELH. A Tryptophan repeat motif motif is present at residues 985–1001; sequence WETWWTEYWQATWIPEW. The RNase H type-1 domain maps to 1021-1144; the sequence is IVGAETFYVD…VDKLVSAGIR (124 aa). 4 residues coordinate Mg(2+): aspartate 1030, glutamate 1065, aspartate 1085, and aspartate 1136. The Integrase-type zinc finger occupies 1150–1191; it reads DGIDKAQDEHEKYHSNWRAMASDFNLPPVVAKEIVASCDKCQ. Histidine 1159, histidine 1163, cysteine 1187, and cysteine 1190 together coordinate Zn(2+). Residues 1201–1351 enclose the Integrase catalytic domain; the sequence is VDCSPGIWQL…SAGERIVDII (151 aa). Aspartate 1211, aspartate 1263, and glutamate 1299 together coordinate Mg(2+). A DNA-binding region (integrase-type) is located at residues 1370–1417; that stretch reads FRVYYRDSRNPLWKGPAKLLWKGEGAVVIQDNSDIKVVPRRKAKIIRD.

Homotrimer; further assembles as hexamers of trimers. Interacts with gp41 (via C-terminus). Interacts with host CALM1; this interaction induces a conformational change in the Matrix protein, triggering exposure of the myristate group. Interacts with host AP3D1; this interaction allows the polyprotein trafficking to multivesicular bodies during virus assembly. Part of the pre-integration complex (PIC) which is composed of viral genome, matrix protein, Vpr and integrase. As to quaternary structure, homodimer; the homodimer further multimerizes as homohexamers or homopentamers. Interacts with human PPIA/CYPA; This interaction stabilizes the capsid. Interacts with human NUP153. Interacts with host PDZD8; this interaction stabilizes the capsid. Interacts with monkey TRIM5; this interaction destabilizes the capsid. In terms of assembly, homodimer, whose active site consists of two apposed aspartic acid residues. Heterodimer of p66 RT and p51 RT (RT p66/p51). Heterodimerization of RT is essential for DNA polymerase activity. The overall folding of the subdomains is similar in p66 RT and p51 RT but the spatial arrangements of the subdomains are dramatically different. As to quaternary structure, homotetramer; may further associate as a homohexadecamer. Part of the pre-integration complex (PIC) which is composed of viral genome, matrix protein, Vpr and integrase. Interacts with human SMARCB1/INI1 and human PSIP1/LEDGF isoform 1. Interacts with human KPNA3; this interaction might play a role in nuclear import of the pre-integration complex. Interacts with human NUP153; this interaction might play a role in nuclear import of the pre-integration complex. The cofactor is Mg(2+). Specific enzymatic cleavages by the viral protease yield mature proteins. The protease is released by autocatalytic cleavage. The polyprotein is cleaved during and after budding, this process is termed maturation. Proteolytic cleavage of p66 RT removes the RNase H domain to yield the p51 RT subunit. Nucleocapsid protein p7 might be further cleaved after virus entry. Post-translationally, tyrosine phosphorylated presumably in the virion by a host kinase. Phosphorylation is apparently not a major regulator of membrane association. In terms of processing, phosphorylated possibly by host MAPK1; this phosphorylation is necessary for Pin1-mediated virion uncoating. Methylated by host PRMT6, impairing its function by reducing RNA annealing and the initiation of reverse transcription.

Its subcellular location is the host cell membrane. It localises to the host endosome. It is found in the host multivesicular body. The protein localises to the virion membrane. The protein resides in the host nucleus. Its subcellular location is the host cytoplasm. It localises to the virion. It carries out the reaction Specific for a P1 residue that is hydrophobic, and P1' variable, but often Pro.. It catalyses the reaction Endohydrolysis of RNA in RNA/DNA hybrids. Three different cleavage modes: 1. sequence-specific internal cleavage of RNA. Human immunodeficiency virus type 1 and Moloney murine leukemia virus enzymes prefer to cleave the RNA strand one nucleotide away from the RNA-DNA junction. 2. RNA 5'-end directed cleavage 13-19 nucleotides from the RNA end. 3. DNA 3'-end directed cleavage 15-20 nucleotides away from the primer terminus.. The catalysed reaction is 3'-end directed exonucleolytic cleavage of viral RNA-DNA hybrid.. The enzyme catalyses DNA(n) + a 2'-deoxyribonucleoside 5'-triphosphate = DNA(n+1) + diphosphate. Protease: The viral protease is inhibited by many synthetic protease inhibitors (PIs), such as amprenavir, atazanavir, indinavir, loprinavir, nelfinavir, ritonavir and saquinavir. Use of protease inhibitors in tritherapy regimens permit more ambitious therapeutic strategies. Reverse transcriptase/ribonuclease H: RT can be inhibited either by nucleoside RT inhibitors (NRTIs) or by non nucleoside RT inhibitors (NNRTIs). NRTIs act as chain terminators, whereas NNRTIs inhibit DNA polymerization by binding a small hydrophobic pocket near the RT active site and inducing an allosteric change in this region. Classical NRTIs are abacavir, adefovir (PMEA), didanosine (ddI), lamivudine (3TC), stavudine (d4T), tenofovir (PMPA), zalcitabine (ddC), and zidovudine (AZT). Classical NNRTIs are atevirdine (BHAP U-87201E), delavirdine, efavirenz (DMP-266), emivirine (I-EBU), and nevirapine (BI-RG-587). The tritherapies used as a basic effective treatment of AIDS associate two NRTIs and one NNRTI. Functionally, mediates, with Gag polyprotein, the essential events in virion assembly, including binding the plasma membrane, making the protein-protein interactions necessary to create spherical particles, recruiting the viral Env proteins, and packaging the genomic RNA via direct interactions with the RNA packaging sequence (Psi). Gag-Pol polyprotein may regulate its own translation, by the binding genomic RNA in the 5'-UTR. At low concentration, the polyprotein would promote translation, whereas at high concentration, the polyprotein would encapsidate genomic RNA and then shut off translation. Its function is as follows. Targets the polyprotein to the plasma membrane via a multipartite membrane-binding signal, that includes its myristoylated N-terminus. Matrix protein is part of the pre-integration complex. Implicated in the release from host cell mediated by Vpu. Binds to RNA. Forms the conical core that encapsulates the genomic RNA-nucleocapsid complex in the virion. Most core are conical, with only 7% tubular. The core is constituted by capsid protein hexamer subunits. The core is disassembled soon after virion entry. Host restriction factors such as TRIM5-alpha or TRIMCyp bind retroviral capsids and cause premature capsid disassembly, leading to blocks in reverse transcription. Capsid restriction by TRIM5 is one of the factors which restricts HIV-1 to the human species. Host PIN1 apparently facilitates the virion uncoating. On the other hand, interactions with PDZD8 or CYPA stabilize the capsid. In terms of biological role, encapsulates and protects viral dimeric unspliced genomic RNA (gRNA). Binds these RNAs through its zinc fingers. Acts as a nucleic acid chaperone which is involved in rearangement of nucleic acid secondary structure during gRNA retrotranscription. Also facilitates template switch leading to recombination. As part of the polyprotein, participates in gRNA dimerization, packaging, tRNA incorporation and virion assembly. Functionally, aspartyl protease that mediates proteolytic cleavages of Gag and Gag-Pol polyproteins during or shortly after the release of the virion from the plasma membrane. Cleavages take place as an ordered, step-wise cascade to yield mature proteins. This process is called maturation. Displays maximal activity during the budding process just prior to particle release from the cell. Also cleaves Nef and Vif, probably concomitantly with viral structural proteins on maturation of virus particles. Hydrolyzes host EIF4GI and PABP1 in order to shut off the capped cellular mRNA translation. The resulting inhibition of cellular protein synthesis serves to ensure maximal viral gene expression and to evade host immune response. Also mediates cleavage of host YTHDF3. Mediates cleavage of host CARD8, thereby activating the CARD8 inflammasome, leading to the clearance of latent HIV-1 in patient CD4(+) T-cells after viral reactivation; in contrast, HIV-1 can evade CARD8-sensing when its protease remains inactive in infected cells prior to viral budding. Its function is as follows. Multifunctional enzyme that converts the viral RNA genome into dsDNA in the cytoplasm, shortly after virus entry into the cell. This enzyme displays a DNA polymerase activity that can copy either DNA or RNA templates, and a ribonuclease H (RNase H) activity that cleaves the RNA strand of RNA-DNA heteroduplexes in a partially processive 3' to 5' endonucleasic mode. Conversion of viral genomic RNA into dsDNA requires many steps. A tRNA(3)-Lys binds to the primer-binding site (PBS) situated at the 5'-end of the viral RNA. RT uses the 3' end of the tRNA primer to perform a short round of RNA-dependent minus-strand DNA synthesis. The reading proceeds through the U5 region and ends after the repeated (R) region which is present at both ends of viral RNA. The portion of the RNA-DNA heteroduplex is digested by the RNase H, resulting in a ssDNA product attached to the tRNA primer. This ssDNA/tRNA hybridizes with the identical R region situated at the 3' end of viral RNA. This template exchange, known as minus-strand DNA strong stop transfer, can be either intra- or intermolecular. RT uses the 3' end of this newly synthesized short ssDNA to perform the RNA-dependent minus-strand DNA synthesis of the whole template. RNase H digests the RNA template except for two polypurine tracts (PPTs) situated at the 5'-end and near the center of the genome. It is not clear if both polymerase and RNase H activities are simultaneous. RNase H probably can proceed both in a polymerase-dependent (RNA cut into small fragments by the same RT performing DNA synthesis) and a polymerase-independent mode (cleavage of remaining RNA fragments by free RTs). Secondly, RT performs DNA-directed plus-strand DNA synthesis using the PPTs that have not been removed by RNase H as primers. PPTs and tRNA primers are then removed by RNase H. The 3' and 5' ssDNA PBS regions hybridize to form a circular dsDNA intermediate. Strand displacement synthesis by RT to the PBS and PPT ends produces a blunt ended, linear dsDNA copy of the viral genome that includes long terminal repeats (LTRs) at both ends. Catalyzes viral DNA integration into the host chromosome, by performing a series of DNA cutting and joining reactions. This enzyme activity takes place after virion entry into a cell and reverse transcription of the RNA genome in dsDNA. The first step in the integration process is 3' processing. This step requires a complex comprising the viral genome, matrix protein, Vpr and integrase. This complex is called the pre-integration complex (PIC). The integrase protein removes 2 nucleotides from each 3' end of the viral DNA, leaving recessed CA OH's at the 3' ends. In the second step, the PIC enters cell nucleus. This process is mediated through integrase and Vpr proteins, and allows the virus to infect a non dividing cell. This ability to enter the nucleus is specific of lentiviruses, other retroviruses cannot and rely on cell division to access cell chromosomes. In the third step, termed strand transfer, the integrase protein joins the previously processed 3' ends to the 5' ends of strands of target cellular DNA at the site of integration. The 5'-ends are produced by integrase-catalyzed staggered cuts, 5 bp apart. A Y-shaped, gapped, recombination intermediate results, with the 5'-ends of the viral DNA strands and the 3' ends of target DNA strands remaining unjoined, flanking a gap of 5 bp. The last step is viral DNA integration into host chromosome. This involves host DNA repair synthesis in which the 5 bp gaps between the unjoined strands are filled in and then ligated. Since this process occurs at both cuts flanking the HIV genome, a 5 bp duplication of host DNA is produced at the ends of HIV-1 integration. Alternatively, Integrase may catalyze the excision of viral DNA just after strand transfer, this is termed disintegration. This Human immunodeficiency virus type 1 group M subtype B (isolate LW123) (HIV-1) protein is Gag-Pol polyprotein (gag-pol).